The chain runs to 668 residues: MKPASRLFYLSLFALWSPEAQCKSDESCAISPKAIVSDACASYSTLEQLNRDIKPALEDLTRTTDFFSHYRLNLFNKECPFWNDENGMCGNIACAVETLDNEEDIPEVWRAKELGKLEGPRAKHPGKSVQKEEPKRPLQGKLGEDVGESCVVEYDDECDDRDYCVPDDEGASSKGDYVSLLRNPERFTGYAGDGAKQVWDAIYRENCFQKSSFPKSASLGDTYSVPKNPAAQDFRAVMQAAGRQHMLEQQREQNPLVPFVTKTGLESEDECLEKRVFYKIVSGMHASISTHLCWDFLNQTTGQWQPNLSCYINRLHKFPERISNLYFNYALLTRAVAKLGPYLSSHEEYTFCTGDPAQDADTRAKVLAVTSKAANTVPGPVFDESIMFKNGEGPSLKEDFRNRFRNISRLMDCVGCDKCRLWGKLQTAGYGTALKVLFEFANNDTSATSSETDEIPFKLKRTELVALFNTYARLSSSLDAIQKFRAMVEESEEGQQPQSHEQIEGSENSGAHHIPDRAKKPRHVIVPTPDAADHAEASDTNTATTAVDEAKAAGVTPAPKVEHQQQVEVDNNDDDDDDDEFHEFQRQPQQPDTDPNFVYKKRTLKDDFENEFRAVFAAFKLVIRSYLNLPALIYEITITELKRFWQFYVGLPVMPRTWEFRRPSLDEL.

A signal peptide spans 1-22; it reads MKPASRLFYLSLFALWSPEAQC. Intrachain disulfides connect cysteine 79–cysteine 413, cysteine 89–cysteine 94, cysteine 150–cysteine 352, and cysteine 416–cysteine 419. Positions 116 to 142 are disordered; it reads KLEGPRAKHPGKSVQKEEPKRPLQGKL. The FAD site is built by arginine 186, threonine 188, tryptophan 199, serine 282, and histidine 285. Asparagine 298 and asparagine 307 each carry an N-linked (GlcNAc...) asparagine glycan. Arginine 314 contacts FAD. Asparagine 406 is a glycosylation site (N-linked (GlcNAc...) asparagine). The active-site Nucleophile is cysteine 416. Cysteine 419 is an active-site residue. A glycan (N-linked (GlcNAc...) asparagine) is linked at asparagine 443. Disordered regions lie at residues 488–519 and 554–597; these read VEESEEGQQPQSHEQIEGSENSGAHHIPDRAK and GVTP…DPNF. The segment covering 494–509 has biased composition (polar residues); the sequence is GQQPQSHEQIEGSENS. The span at 570 to 581 shows a compositional bias: acidic residues; that stretch reads DNNDDDDDDDEF.

It belongs to the EROs family. As to quaternary structure, may function both as a monomer and a homodimer. It depends on FAD as a cofactor.

The protein localises to the endoplasmic reticulum membrane. Essential oxidoreductase that oxidizes proteins in the endoplasmic reticulum to produce disulfide bonds. Acts by oxidizing directly pdi1 isomerase through a direct disulfide exchange. Does not act as a direct oxidant of folding substrate, but relies on pdi1 to transfer oxidizing equivalent. Does not oxidize all pdi related proteins, suggesting that it can discriminate between pdi1 and related proteins. Its reoxidation probably involves electron transfer to molecular oxygen via FAD. Acts independently of glutathione. May be responsible for a significant proportion of reactive oxygen species (ROS) in the cell, thereby being a source of oxidative stress. The protein is Endoplasmic reticulum oxidoreductin-1 (ero-1) of Neurospora crassa (strain ATCC 24698 / 74-OR23-1A / CBS 708.71 / DSM 1257 / FGSC 987).